The primary structure comprises 348 residues: Phosphate acyltransferase (348 aa).

Belongs to the PlsX family. In terms of assembly, homodimer. Probably interacts with PlsY.

It localises to the cytoplasm. It carries out the reaction a fatty acyl-[ACP] + phosphate = an acyl phosphate + holo-[ACP]. It functions in the pathway lipid metabolism; phospholipid metabolism. Its function is as follows. Catalyzes the reversible formation of acyl-phosphate (acyl-PO(4)) from acyl-[acyl-carrier-protein] (acyl-ACP). This enzyme utilizes acyl-ACP as fatty acyl donor, but not acyl-CoA. The chain is Phosphate acyltransferase from Synechocystis sp. (strain ATCC 27184 / PCC 6803 / Kazusa).